Here is a 966-residue protein sequence, read N- to C-terminus: Catenin alpha-2 (966 aa).

Basic and acidic residues predominate over residues 924–940 (PEKKPLVKREKPEEYQT). The disordered stretch occupies residues 924 to 952 (PEKKPLVKREKPEEYQTRVRRGSQKKHIS). A compositionally biased stretch (basic residues) spans 941-951 (RVRRGSQKKHI).

This sequence belongs to the vinculin/alpha-catenin family.

The protein localises to the cell membrane. Its subcellular location is the cytoplasm. The protein resides in the cytoskeleton. It localises to the cell junction. It is found in the adherens junction. The protein localises to the cell projection. Its subcellular location is the axon. The protein resides in the nucleus. May function as a linker between cadherin adhesion receptors and the cytoskeleton to regulate cell-cell adhesion and differentiation in the nervous system. The polypeptide is Catenin alpha-2 (ctnna2) (Xenopus laevis (African clawed frog)).